Consider the following 518-residue polypeptide: Sensor protein kinase HptS (518 aa).

The next 2 helical transmembrane spans lie at 20–40 and 222–242; these read IFPVFLVIIIGLVSFYAIYIW and GITLLIVMAVVLVLLVIFGFI. The region spanning 297-513 is the Histidine kinase domain; that stretch reads EQLIHSIEHT…LICYKIPLSR (217 aa). A Phosphohistidine; by autocatalysis modification is found at His-325.

Autophosphorylated.

It is found in the cell membrane. It carries out the reaction ATP + protein L-histidine = ADP + protein N-phospho-L-histidine.. In terms of biological role, member of the two-component regulatory system HptS/HptR that regulates genes involved in hexose phosphate transport system in response to changes in extracellular phosphate sources. May act as a sensor protein kinase which is autophosphorylated at a histidine residue and transfers its phosphate group to the conserved aspartic acid residue in the regulatory domain of HptS. In turn, HptS antagonizes CcpA-dependent transcription of a subset of CcpA-regulated genes involved in antibiotic susceptibility. This chain is Sensor protein kinase HptS (hptS), found in Staphylococcus aureus (strain bovine RF122 / ET3-1).